A 279-amino-acid polypeptide reads, in one-letter code: MFLDPVINFFGTVLEMFRSGGVITYLIAAIGIYGFITALEKIHYLRKISRVSTPQIIGAVNESMEKGGALEALREIGQYQNPVSKIISEALKIGYRNRSEVEDAMERVFIVEMSNMTRGLGTLRTIIEVAPMLGLIGTVIGIWYTFRALGVNADPAAMAEGIYVALITTILGLAVAIILMPLYSYITGRIDDEIDKIELIKKMTNWGYAVMRISVEGNVDDVVKALMESDGVVSVRVVDEPDANVVVAFKPSMLEKSINNIIIERCGKSAEIIESKLRQ.

3 helical membrane-spanning segments follow: residues Ser19 to Leu39, Ile126 to Phe146, and Ile162 to Leu182.

Belongs to the ExbB/TolQ family.

The protein resides in the cell membrane. This is Putative biopolymer transport protein ExbB homolog from Methanothermobacter thermautotrophicus (strain ATCC 29096 / DSM 1053 / JCM 10044 / NBRC 100330 / Delta H) (Methanobacterium thermoautotrophicum).